Reading from the N-terminus, the 265-residue chain is Mlc titration factor A (265 aa).

Positions 111, 148, 152, and 211 each coordinate Zn(2+).

It belongs to the MtfA family. As to quaternary structure, interacts with Mlc. The cofactor is Zn(2+).

The protein resides in the cytoplasm. Its function is as follows. Involved in the modulation of the activity of the glucose-phosphotransferase system (glucose-PTS). Interacts with the transcriptional repressor Mlc, preventing its interaction with DNA and leading to the modulation of expression of genes regulated by Mlc, including ptsG, which encodes the PTS system glucose-specific EIICB component. Shows zinc-dependent metallopeptidase activity. The polypeptide is Mlc titration factor A (Escherichia coli O6:K15:H31 (strain 536 / UPEC)).